Reading from the N-terminus, the 93-residue chain is MSRSIKKGPFIDDHLMKKTLKAKESKDNRPIKTWSRRSTILPEMIGFTYNVHNGRVFIPVYITENHVGYKLGEFAPTRTFKGHKGSVQKKIGK.

The protein belongs to the universal ribosomal protein uS19 family.

Its function is as follows. Protein S19 forms a complex with S13 that binds strongly to the 16S ribosomal RNA. In Helicobacter acinonychis (strain Sheeba), this protein is Small ribosomal subunit protein uS19.